A 78-amino-acid polypeptide reads, in one-letter code: Acyl carrier protein (78 aa).

A Carrier domain is found at 1–76 (MALFEDIQAV…DVVKYIEDNK (76 aa)). Ser-36 is subject to O-(pantetheine 4'-phosphoryl)serine.

Belongs to the acyl carrier protein (ACP) family. 4'-phosphopantetheine is transferred from CoA to a specific serine of apo-ACP by AcpS. This modification is essential for activity because fatty acids are bound in thioester linkage to the sulfhydryl of the prosthetic group.

It localises to the cytoplasm. It participates in lipid metabolism; fatty acid biosynthesis. Functionally, carrier of the growing fatty acid chain in fatty acid biosynthesis. In Helicobacter pylori (strain G27), this protein is Acyl carrier protein.